Consider the following 144-residue polypeptide: 3-dehydroquinate dehydratase (144 aa).

Tyrosine 22 functions as the Proton acceptor in the catalytic mechanism. Residues asparagine 73, histidine 79, and aspartate 86 each contribute to the substrate site. The Proton donor role is filled by histidine 99. Substrate-binding positions include 100-101 (LS) and arginine 110.

This sequence belongs to the type-II 3-dehydroquinase family. Homododecamer.

It catalyses the reaction 3-dehydroquinate = 3-dehydroshikimate + H2O. Its pathway is metabolic intermediate biosynthesis; chorismate biosynthesis; chorismate from D-erythrose 4-phosphate and phosphoenolpyruvate: step 3/7. Catalyzes a trans-dehydration via an enolate intermediate. This Geotalea daltonii (strain DSM 22248 / JCM 15807 / FRC-32) (Geobacter daltonii) protein is 3-dehydroquinate dehydratase.